A 242-amino-acid polypeptide reads, in one-letter code: Probable 2-phosphosulfolactate phosphatase (242 aa).

It belongs to the ComB family. Requires Mg(2+) as cofactor.

The enzyme catalyses (2R)-O-phospho-3-sulfolactate + H2O = (2R)-3-sulfolactate + phosphate. This chain is Probable 2-phosphosulfolactate phosphatase, found in Picosynechococcus sp. (strain ATCC 27264 / PCC 7002 / PR-6) (Agmenellum quadruplicatum).